Consider the following 674-residue polypeptide: Linear primary-alkylsulfatase (674 aa).

Residues 1-41 (MKLNALSTATHGSRSSPVKLWKFSTSFLLAASIIVSGQSWA) form the signal peptide. Zn(2+) is bound by residues His-192, His-194, Asp-196, His-197, Glu-303, and Glu-322. Sulfate is bound by residues 330–335 (NTYSLR) and Arg-340. His-367 provides a ligand contact to Zn(2+). Tyr-428 lines the sulfate pocket.

This sequence belongs to the metallo-beta-lactamase superfamily. Type III sulfatase family. As to quaternary structure, homodimer. Zn(2+) serves as cofactor.

Its subcellular location is the periplasm. It catalyses the reaction a primary linear alkyl sulfate ester + H2O = a primary alcohol + sulfate + H(+). Inhibited by EDTA. Slightly activated in the presence of Ca(2+). Functionally, alkylsulfatase that cleaves primary alkyl sulfates such as sodium octyl sulfate and the widely used detergent sodium dodecyl sulfate (SDS). The sequence is that of Linear primary-alkylsulfatase from Pseudomonas sp.